The following is a 293-amino-acid chain: Protein translocase subunit SecF (293 aa).

6 helical membrane passes run 10–30 (ARIFFSITAVVLIVGIVSMFA), 130–150 (VKSAVGAVVLSWVLMIIYITI), 158–178 (LAAIVALIIDVMVTLTWFSVL), 185–205 (SFVAALLTVVGYSVNGTIVVF), 244–264 (LFAVVAIFLFGGETIHNFSFA), and 267–287 (VGFCSGFYTSTFLAGSMWLFF).

The protein belongs to the SecD/SecF family. SecF subfamily. Forms a complex with SecD. Part of the essential Sec protein translocation apparatus which comprises SecA, SecYEG and auxiliary proteins SecDF. Other proteins may also be involved.

Its subcellular location is the cell membrane. Part of the Sec protein translocase complex. Interacts with the SecYEG preprotein conducting channel. SecDF uses the proton motive force (PMF) to complete protein translocation after the ATP-dependent function of SecA. This chain is Protein translocase subunit SecF, found in Acidaminococcus fermentans (strain ATCC 25085 / DSM 20731 / CCUG 9996 / CIP 106432 / VR4).